The chain runs to 409 residues: Dipeptidase 1 (409 aa).

The N-terminal stretch at 1–16 (MWTSWWLWPLVAVCAA) is a signal peptide. H36 and D38 together coordinate Zn(2+). The N-linked (GlcNAc...) asparagine glycan is linked to N57. A disulfide bond links C87 and C170. Residue E141 coordinates Zn(2+). Position 168 (H168) interacts with substrate. Positions 214 and 235 each coordinate Zn(2+). Residues C242 and C274 are joined by a disulfide bond. A substrate-binding site is contributed by R246. Residue N279 is glycosylated (N-linked (GlcNAc...) asparagine). Position 304 (D304) interacts with substrate. S384 is lipidated: GPI-anchor amidated serine. Positions 385 to 409 (AAPSLHLPPGSLLASLVPLLLLSLP) are cleaved as a propeptide — removed in mature form.

The protein belongs to the metallo-dependent hydrolases superfamily. Peptidase M19 family. As to quaternary structure, homodimer; disulfide-linked. The cofactor is Zn(2+).

It is found in the apical cell membrane. Its subcellular location is the cell projection. The protein localises to the microvillus membrane. The protein resides in the cell membrane. The catalysed reaction is an L-aminoacyl-L-amino acid + H2O = 2 an L-alpha-amino acid. It catalyses the reaction leukotriene D4 + H2O = leukotriene E4 + glycine. It carries out the reaction L-cystine-bis-glycine + 2 H2O = L-cystine + 2 glycine. The enzyme catalyses a beta-lactam + H2O = a substituted beta-amino acid. The catalysed reaction is glycyldehydrophenylalanine + H2O = 2,3-didehydrophenylalanine + glycine. Inhibited by L-penicillamine. Inhibited by cilastatin. Functionally, hydrolyzes a wide range of dipeptides. Hydrolyzes the conversion of leukotriene D4 to leukotriene E4. Hydrolyzes cystinyl-bis-glycine (cys-bis-gly) formed during glutathione degradation. Also possesses beta lactamase activity and hydrolytically inactivates beta-lactam antibiotics. In terms of biological role, independently of its dipeptidase activity, acts as an adhesion receptor for neutrophil recruitment from bloodstream into inflamed lungs and liver. The protein is Dipeptidase 1 (DPEP1) of Sus scrofa (Pig).